Consider the following 281-residue polypeptide: Phosphate import ATP-binding protein PstB (281 aa).

Positions phenylalanine 33–isoleucine 276 constitute an ABC transporter domain. Glycine 67–serine 74 is an ATP binding site.

The protein belongs to the ABC transporter superfamily. Phosphate importer (TC 3.A.1.7) family. In terms of assembly, the complex is composed of two ATP-binding proteins (PstB), two transmembrane proteins (PstC and PstA) and a solute-binding protein (PstS).

Its subcellular location is the cell membrane. The catalysed reaction is phosphate(out) + ATP + H2O = ADP + 2 phosphate(in) + H(+). Its function is as follows. Part of the ABC transporter complex PstSACB involved in phosphate import. Responsible for energy coupling to the transport system. The polypeptide is Phosphate import ATP-binding protein PstB (Mycoplasma mobile (strain ATCC 43663 / 163K / NCTC 11711) (Mesomycoplasma mobile)).